The chain runs to 217 residues: MKKIGVILSGCGVYDGSEIHEAVLTLLAISRSGAQAVCFAPDKQQVDVINHLTGEAMTETRNVLIEAARITRGEIRPLAQADAAELDALIVPGGFGAAKNLSNFASLGSECTVDRELKALAQAMHQAGKPLGFMCIAPAMLPKIFDFPLRLTIGTDIDTAEVLEEMGAEHVPCPVDDIVVDEDNKIVTTPAYMLAQNIAEAASGIDKLVSRVLVLAE.

Cysteine 135 acts as the Nucleophile in catalysis.

The protein belongs to the peptidase C56 family. As to quaternary structure, homodimer.

The catalysed reaction is glyoxal + H2O = glycolate + H(+). In terms of biological role, displays glyoxalase activity, catalyzing the conversion of glyoxal to glycolate. However, this apparent glyoxalase activity may reflect a protein deglycase activity, which could be the primary function of this protein like other DJ-1 superfamily members such as PARK7, YajL, YhbO and HchA. Is not able to use methylglyoxal as substrate. This Escherichia coli (strain K12) protein is Glyoxalase ElbB.